Consider the following 217-residue polypeptide: 3,4-dihydroxy-2-butanone 4-phosphate synthase (217 aa).

D-ribulose 5-phosphate-binding positions include 37–38, Asp42, 150–154, and Glu174; these read RE and RGGHT. Residue Glu38 participates in Mg(2+) binding. Residue His153 participates in Mg(2+) binding.

The protein belongs to the DHBP synthase family. As to quaternary structure, homodimer. Requires Mg(2+) as cofactor. It depends on Mn(2+) as a cofactor.

It carries out the reaction D-ribulose 5-phosphate = (2S)-2-hydroxy-3-oxobutyl phosphate + formate + H(+). It participates in cofactor biosynthesis; riboflavin biosynthesis; 2-hydroxy-3-oxobutyl phosphate from D-ribulose 5-phosphate: step 1/1. Catalyzes the conversion of D-ribulose 5-phosphate to formate and 3,4-dihydroxy-2-butanone 4-phosphate. The sequence is that of 3,4-dihydroxy-2-butanone 4-phosphate synthase from Pectobacterium carotovorum subsp. carotovorum (strain PC1).